Reading from the N-terminus, the 428-residue chain is ORC1-type DNA replication protein 5 (428 aa).

Residues 62–66, Y219, and R231 contribute to the ATP site; that span reads TGKSL.

It belongs to the CDC6/cdc18 family.

Functionally, involved in regulation of DNA replication. The chain is ORC1-type DNA replication protein 5 (orc5) from Halobacterium salinarum (strain ATCC 700922 / JCM 11081 / NRC-1) (Halobacterium halobium).